Consider the following 635-residue polypeptide: Biosynthetic arginine decarboxylase (635 aa).

Residue Lys100 is modified to N6-(pyridoxal phosphate)lysine. 282-292 (VDIGGGLGVDY) is a substrate binding site.

Belongs to the Orn/Lys/Arg decarboxylase class-II family. SpeA subfamily. The cofactor is Mg(2+). Pyridoxal 5'-phosphate is required as a cofactor.

It catalyses the reaction L-arginine + H(+) = agmatine + CO2. Its pathway is amine and polyamine biosynthesis; agmatine biosynthesis; agmatine from L-arginine: step 1/1. Functionally, catalyzes the biosynthesis of agmatine from arginine. This Geotalea daltonii (strain DSM 22248 / JCM 15807 / FRC-32) (Geobacter daltonii) protein is Biosynthetic arginine decarboxylase.